The following is a 445-amino-acid chain: Disintegrin and metalloproteinase domain-containing protein 18 (445 aa).

Positions 1–106 (IYRKHLKYIG…LDMQCLGDLS (106 aa)) constitute a Peptidase M12B domain. At 1-409 (IYRKHLKYIG…TKRLSQHADS (409 aa)) the chain is on the extracellular side. Disulfide bonds link Cys18-Cys101, Cys60-Cys85, and Cys62-Cys67. 2 N-linked (GlcNAc...) asparagine glycosylation sites follow: Asn19 and Asn59. 2 N-linked (GlcNAc...) asparagine glycosylation sites follow: Asn84 and Asn131. The region spanning 113 to 202 (QSVCGNGIVE…HCVPDTFALD (90 aa)) is the Disintegrin domain. Residues Cys173 and Cys194 are joined by a disulfide bond. Asn333 and Asn340 each carry an N-linked (GlcNAc...) asparagine glycan. An EGF-like domain is found at 342-376 (TGNDCNAAKKCKGNGICNNFGHCQCFPDYRPPDCN). Disulfide bonds link Cys346–Cys358, Cys352–Cys364, and Cys366–Cys375. A helical membrane pass occupies residues 410-430 (WVILGFFIFLPFIMTLFLGII). The Cytoplasmic portion of the chain corresponds to 431-445 (KRNERKIVPQKEQER).

In terms of processing, the prodomain and the metalloprotease-like domain are cleaved during the epididymal maturation of the spermatozoa. As to expression, expressed specifically in testis.

It localises to the membrane. Functionally, sperm surface membrane protein that may be involved in spermatogenesis and fertilization. This is a non catalytic metalloprotease-like protein. This chain is Disintegrin and metalloproteinase domain-containing protein 18 (Adam18), found in Rattus norvegicus (Rat).